The primary structure comprises 947 residues: MADSDDEYDRKRRDKFRGERDSYRTERRDDRRPVGGSAGARDEWAERNPFRGAASAGGGGARHRPDYSDYRGPGARPRYGSPGRDLPPAKRMRPDWGDGDVRANPRFGGYDPYLMQAWNDHYQSMHSAYSHAGHAPPVRESIGGGGSDTLTQPAMLNLKQFLDTQDENISDSEVMRKYTEYKTDFKRQQLNEFFVAHKDEEWFKNKYHPEDSVKRSEEQRGFLQRRTDVFMELFENGTIGSVKVDSSQADALIRVLDTCVIKLEGGTDEDLKVLDEKPKDPVVYERKAEPMQSVKAVEKTINSPKDEITEADPLPVVVSTQRKPVGPVNSDEENWDDDNDAENSAPKKELAEDSKDSDSKPEDKQLNKKKTKKRKRNSSDDDSSSSESSSSSDEEKLKEKYDVEDGLRTEQKIEAEKDRQEATKAKQEPQSPKLDEVEGNDTTEPKGLDSKINTVEIDDTLKSPEISSNPIKNTDNGDSSKVEEDEEKPSVGKDNVVETETIDLDKVKDCQPRALHRTSSIFLRNLAPSITRSEIEAVCNRFNGYLRVAIADPLVERRWYRRGWITFMRDVNIKEICWGLNNQRLRDCEMGAIVNRDLSRRVRPANGITAHKQVVRSDIKLCAKIALNLDEKFRLWAEVPKDDSNSARANESSENGSGSTYGFNSQNPVLQNITDYLIEEASAEEEELLGLTGENKDTEGEPIERDEQLISVLDRLVLYLRIVHSVDYYNHCEYPYEDEMPNRCGIIHARGPPPVRVTNNDVQEYIKMYETKLQQFLTKTVPLSDEEIKNLGAKDAETEVEKFVQANTQELAKDKWLCPLSGKKFKGPEFIRKHIFNKHEEKVDEVRKEVQYFNNYLRDPKRPQLPEHPGTSKRPESESARGGGGGYRPPMYPPFSAMPYGFGPPMRGGGRAGRNFPPARRELPLEHQRRLIGYHDLDAPANSDMFD.

Disordered regions lie at residues Met1–Asp100, Thr300–Gly492, Asp643–Gln666, and Asn855–Tyr892. 2 stretches are compositionally biased toward basic and acidic residues: residues Tyr8–Pro33 and Ala40–Pro49. At Tyr79 the chain carries Phosphotyrosine. A Phosphoserine modification is found at Ser81. A Phosphothreonine modification is found at Thr300. Phosphoserine is present on residues Ser303, Ser330, Ser354, and Ser357. A compositionally biased stretch (acidic residues) spans Ser330–Ala341. Positions Ala345 to Leu366 are enriched in basic and acidic residues. Positions Asn367 to Arg376 are enriched in basic residues. The segment covering Asp393–Gln427 has biased composition (basic and acidic residues). At Ser431 the chain carries Phosphoserine. Over residues Glu465–Ser479 the composition is skewed to polar residues. A phosphoserine mark is found at Ser644 and Ser646. Positions Ser646–Ser657 are enriched in low complexity.

Belongs to the ARS2 family. Interacts with cbp20, Dcr-2 and pasha.

It localises to the nucleus. In terms of biological role, acts as a mediator between the cap-binding complex (CBC) and RNA-mediated gene silencing (RNAi). Involved in innate immunity via the short interfering RNAs (siRNAs) processing machinery by restricting the viral RNA production. Also involved microRNA (miRNA)-mediated silencing by contributing to the stability and delivery of primary miRNA transcripts to the primary miRNA processing complex containing drosha and pasha. This Drosophila simulans (Fruit fly) protein is Serrate RNA effector molecule homolog (Ars2).